Reading from the N-terminus, the 147-residue chain is Protein archease (147 aa).

Asp17, Asp146, and Ile147 together coordinate Ca(2+).

The protein belongs to the archease family.

Its function is as follows. Activates the tRNA-splicing ligase complex by facilitating the enzymatic turnover of catalytic subunit RtcB. Acts by promoting the guanylylation of RtcB, a key intermediate step in tRNA ligation. Can also alter the NTP specificity of RtcB such that ATP, dGTP or ITP is used efficiently. This is Protein archease from Pyrobaculum neutrophilum (strain DSM 2338 / JCM 9278 / NBRC 100436 / V24Sta) (Thermoproteus neutrophilus).